Reading from the N-terminus, the 115-residue chain is NADH-ubiquinone oxidoreductase chain 3 (115 aa).

3 consecutive transmembrane segments (helical) span residues 4–24 (IMVI…AFWL), 55–75 (FFLV…LLPI), and 86–106 (TMML…AYEW).

This sequence belongs to the complex I subunit 3 family. As to quaternary structure, core subunit of respiratory chain NADH dehydrogenase (Complex I) which is composed of 45 different subunits. Interacts with TMEM186. Interacts with TMEM242.

Its subcellular location is the mitochondrion inner membrane. The catalysed reaction is a ubiquinone + NADH + 5 H(+)(in) = a ubiquinol + NAD(+) + 4 H(+)(out). In terms of biological role, core subunit of the mitochondrial membrane respiratory chain NADH dehydrogenase (Complex I) which catalyzes electron transfer from NADH through the respiratory chain, using ubiquinone as an electron acceptor. Essential for the catalytic activity of complex I. The chain is NADH-ubiquinone oxidoreductase chain 3 from Baiomys taylori (Northern pygmy mouse).